Here is a 367-residue protein sequence, read N- to C-terminus: Transcription factor aptf-2 (367 aa).

The tract at residues Val29 to Val49 is disordered. Residues Gly36–Pro47 are compositionally biased toward polar residues. Residues Ala220 to Thr354 are H-S-H (helix-span-helix), dimerization.

This sequence belongs to the AP-2 family. In terms of assembly, binds DNA as a dimer.

It is found in the nucleus. The protein resides in the cytoplasm. Functionally, sequence-specific DNA-binding protein that interacts with enhancer elements to regulate transcription of selected genes. Required for neuroblast and epidermal morphogenesis, perhaps acting in cooperation with transcription factor aptf-4. The sequence is that of Transcription factor aptf-2 from Caenorhabditis elegans.